The primary structure comprises 526 residues: tRNA modification GTPase MSS1, mitochondrial (526 aa).

Residues 1–19 (MNSASFLQSRLISRSFLVR) constitute a mitochondrion transit peptide. The region spanning 274-444 (GIKLVLLGAP…LISTLTSNFE (171 aa)) is the TrmE-type G domain. GTP contacts are provided by residues 281–288 (GAPNVGKS), 328–332 (DTAGI), and 394–397 (NKSD).

This sequence belongs to the TRAFAC class TrmE-Era-EngA-EngB-Septin-like GTPase superfamily. TrmE GTPase family. As to quaternary structure, forms a heterodimer with MTO1.

The protein localises to the mitochondrion. Functionally, GTPase involved in the 5-carboxymethylaminomethyl modification (mnm(5)s(2)U34) of the wobble uridine base in mitochondrial tRNAs. Involved in the expression of cytochrome c oxidase subunit 1 (COX1). Works in association with the small subunit of mitoribosomes. The chain is tRNA modification GTPase MSS1, mitochondrial (MSS1) from Saccharomyces cerevisiae (strain ATCC 204508 / S288c) (Baker's yeast).